A 106-amino-acid polypeptide reads, in one-letter code: Small ribosomal subunit protein uS10 (106 aa).

Belongs to the universal ribosomal protein uS10 family. Part of the 30S ribosomal subunit.

Involved in the binding of tRNA to the ribosomes. The protein is Small ribosomal subunit protein uS10 of Hyphomonas neptunium (strain ATCC 15444).